Consider the following 638-residue polypeptide: Plasma kallikrein (638 aa).

The signal sequence occupies residues 1-19; the sequence is MILFKQVGYFVSLFATVSC. 4 consecutive Apple domains span residues 21-104, 111-194, 201-284, and 292-375; these read CLSQ…LKQC, CHQD…LKSC, CPMD…LFTC, and CHFK…LRLC. Intrachain disulfides connect C21-C104, C47-C77, C51-C57, C111-C194, C137-C166, C141-C147, C201-C284, C227-C256, C231-C237, C292-C375, C318-C347, C322-C328, C340-C345, C383-C503, C419-C435, C517-C584, C548-C563, and C574-C602. N127 is a glycosylation site (N-linked (GlcNAc...) asparagine). N215 carries an N-linked (GlcNAc...) asparagine glycan. N-linked (GlcNAc...) asparagine glycosylation is present at N308. One can recognise a Peptidase S1 domain in the interval 391–626; that stretch reads IVGGTNSSLG…YIDWILEKIQ (236 aa). Residue N396 is glycosylated (N-linked (GlcNAc...) asparagine). Catalysis depends on H434, which acts as the Charge relay system. N-linked (GlcNAc...) asparagine glycosylation occurs at N453. D483 (charge relay system) is an active-site residue. N-linked (GlcNAc...) asparagine glycosylation is present at N494. S578 serves as the catalytic Charge relay system.

It belongs to the peptidase S1 family. Plasma kallikrein subfamily. In terms of assembly, forms a heterodimer with SERPINA5. The zymogen is activated by factor XIIa, which cleaves the molecule into a light chain, which contains the active site, and a heavy chain, which associates with HMW kininogen. These chains are linked by one or more disulfide bonds.

Its subcellular location is the secreted. The enzyme catalyses Cleaves selectively Arg-|-Xaa and Lys-|-Xaa bonds, including Lys-|-Arg and Arg-|-Ser bonds in (human) kininogen to release bradykinin.. With respect to regulation, inhibited by SERPINA5. The enzyme cleaves Lys-Arg and Arg-Ser bonds. It activates, in a reciprocal reaction, factor XII after its binding to a negatively charged surface. It also releases bradykinin from HMW kininogen and may also play a role in the renin-angiotensin system by converting prorenin into renin. In Rattus norvegicus (Rat), this protein is Plasma kallikrein (Klkb1).